A 771-amino-acid polypeptide reads, in one-letter code: Metal transporter CNNM4 (771 aa).

The Extracellular segment spans residues 1–175 (MAPGGGGGRR…LLFMVEEHGR (175 aa)). N-linked (GlcNAc...) asparagine glycosylation is present at Asn-119. In terms of domain architecture, CNNM transmembrane spans 175 to 355 (RFLPLWLHIL…EPYNDLVKEE (181 aa)). The helical transmembrane segment at 176–196 (FLPLWLHILLVMVLLVLSGIF) threads the bilayer. The Cytoplasmic portion of the chain corresponds to 197 to 237 (SGLNLGLMALDPMELRIVQNCGTEKERKYARKIEPIRRKGN). The helical intramembrane region spans 238–258 (YLLCSLLLGNVLVNTSLTILL). The Cytoplasmic segment spans residues 259 to 261 (DNL). The helical transmembrane segment at 262–282 (IGSGIMAVASSTIGIVIFGEI) threads the bilayer. At 283–290 (LPQALCSR) the chain is on the extracellular side. The chain crosses the membrane as a helical span at residues 291–313 (HGLAVGANTIVLTKVFMLLTFPL). Topologically, residues 314 to 771 (SFPISKLLDF…LHRASEEETI (458 aa)) are cytoplasmic. CBS domains lie at 374–435 (MTQL…CTPL) and 442–508 (YNHP…ILDE). Ser-657, Ser-661, and Ser-766 each carry phosphoserine.

It belongs to the ACDP family. As to quaternary structure, interacts with COX11. Cornea, retina, teeth (at protein level). In the retina it is predominantly localized to the outer plexiform layer, inner plexiform layer and ganglion cell layer. In the tooth strongest expression is observed in the cell body of the ameloblasts. Expressed at high levels in the gastrointestinal tract and testis.

It is found in the cell membrane. Its function is as follows. Probable metal transporter. The interaction with the metal ion chaperone COX11 suggests that it may play a role in sensory neuron functions. May play a role in biomineralization and retinal function. The chain is Metal transporter CNNM4 (Cnnm4) from Mus musculus (Mouse).